The primary structure comprises 542 residues: CTP synthase (542 aa).

An amidoligase domain region spans residues 1-265 (MTKFVFVTGG…DEIVCHKLNL (265 aa)). Ser13 provides a ligand contact to CTP. Ser13 is a binding site for UTP. ATP contacts are provided by residues 14–19 (SLGKGI) and Asp71. Positions 71 and 139 each coordinate Mg(2+). Residues 146–148 (DIE), 186–191 (KTKPTQ), and Lys222 each bind CTP. Residues 186–191 (KTKPTQ) and Lys222 contribute to the UTP site. The Glutamine amidotransferase type-1 domain occupies 290–542 (NVAFVGKYVD…IAAALANRKA (253 aa)). Gly351 contacts L-glutamine. The Nucleophile; for glutamine hydrolysis role is filled by Cys378. Residues 379 to 382 (LGMQ), Glu402, and Arg468 each bind L-glutamine. Active-site residues include His515 and Glu517.

This sequence belongs to the CTP synthase family. As to quaternary structure, homotetramer.

The catalysed reaction is UTP + L-glutamine + ATP + H2O = CTP + L-glutamate + ADP + phosphate + 2 H(+). It carries out the reaction L-glutamine + H2O = L-glutamate + NH4(+). The enzyme catalyses UTP + NH4(+) + ATP = CTP + ADP + phosphate + 2 H(+). The protein operates within pyrimidine metabolism; CTP biosynthesis via de novo pathway; CTP from UDP: step 2/2. With respect to regulation, allosterically activated by GTP, when glutamine is the substrate; GTP has no effect on the reaction when ammonia is the substrate. The allosteric effector GTP functions by stabilizing the protein conformation that binds the tetrahedral intermediate(s) formed during glutamine hydrolysis. Inhibited by the product CTP, via allosteric rather than competitive inhibition. Its function is as follows. Catalyzes the ATP-dependent amination of UTP to CTP with either L-glutamine or ammonia as the source of nitrogen. Regulates intracellular CTP levels through interactions with the four ribonucleotide triphosphates. This Methylobacillus flagellatus (strain ATCC 51484 / DSM 6875 / VKM B-1610 / KT) protein is CTP synthase.